The sequence spans 575 residues: uncharacterized protein (575 aa).

The region spanning 1–120 (MKLIEHYVAL…YNMWLSEVFG (120 aa)) is the HTH marR-type domain. The H-T-H motif DNA-binding region spans 26 to 49 (LTEIADCLFCTERNAKLILHKLEN). Positions 176–490 (EPKPHLVHGW…FGFLHLLLSE (315 aa)) are solute-binding region.

It in the C-terminal section; belongs to the bacterial solute-binding protein 5 family.

This is an uncharacterized protein from Bacillus subtilis (strain 168).